We begin with the raw amino-acid sequence, 248 residues long: 2,3-bisphosphoglycerate-dependent phosphoglycerate mutase (248 aa).

Substrate-binding positions include 10 to 17 (RHGQSEWN), 23 to 24 (TG), Arg62, 89 to 92 (ERHY), Lys100, 116 to 117 (RR), and 183 to 184 (GN). His11 serves as the catalytic Tele-phosphohistidine intermediate. The Proton donor/acceptor role is filled by Glu89.

This sequence belongs to the phosphoglycerate mutase family. BPG-dependent PGAM subfamily.

The enzyme catalyses (2R)-2-phosphoglycerate = (2R)-3-phosphoglycerate. It participates in carbohydrate degradation; glycolysis; pyruvate from D-glyceraldehyde 3-phosphate: step 3/5. Catalyzes the interconversion of 2-phosphoglycerate and 3-phosphoglycerate. In Corynebacterium diphtheriae (strain ATCC 700971 / NCTC 13129 / Biotype gravis), this protein is 2,3-bisphosphoglycerate-dependent phosphoglycerate mutase.